The chain runs to 249 residues: Small ribosomal subunit protein eS6 (249 aa).

Disordered stretches follow at residues 161–181 (PLAKEGKKPRTKAPKIQRLVT) and 194–249 (LKKQ…SSQK). Residues 216 to 229 (RSKEAKEKRQEQIA) show a composition bias toward basic and acidic residues. Ser-235, Ser-236, Ser-240, Ser-244, and Ser-247 each carry phosphoserine. Residues 236–249 (SLRASTSKSESSQK) are compositionally biased toward low complexity.

The protein belongs to the eukaryotic ribosomal protein eS6 family. In terms of assembly, component of the small ribosomal subunit. Part of the small subunit (SSU) processome, composed of more than 70 proteins and the RNA chaperone small nucleolar RNA (snoRNA) U3. Post-translationally, ribosomal protein S6 is the major substrate of protein kinases in eukaryote ribosomes. The phosphorylation is stimulated by growth factors, tumor promoting agents, and mitogens. It is dephosphorylated at growth arrest.

The protein resides in the cytoplasm. It is found in the nucleus. It localises to the nucleolus. Functionally, component of the 40S small ribosomal subunit. Plays an important role in controlling cell growth and proliferation through the selective translation of particular classes of mRNA. Part of the small subunit (SSU) processome, first precursor of the small eukaryotic ribosomal subunit. During the assembly of the SSU processome in the nucleolus, many ribosome biogenesis factors, an RNA chaperone and ribosomal proteins associate with the nascent pre-rRNA and work in concert to generate RNA folding, modifications, rearrangements and cleavage as well as targeted degradation of pre-ribosomal RNA by the RNA exosome. The protein is Small ribosomal subunit protein eS6 (rps6) of Xenopus laevis (African clawed frog).